Consider the following 97-residue polypeptide: MSRACELTGKTVQYGNNVSHANNKTRRRFLPNLCNVTLISEVLQQSYRLRVSASALRSVEHRGGLDGFLVKADDKELSQRARLLKRQIVKKKAEKAA.

Belongs to the bacterial ribosomal protein bL28 family.

The sequence is that of Large ribosomal subunit protein bL28 from Bartonella henselae (strain ATCC 49882 / DSM 28221 / CCUG 30454 / Houston 1) (Rochalimaea henselae).